Reading from the N-terminus, the 445-residue chain is Probable D-serine dehydratase (445 aa).

The residue at position 116 (Lys116) is an N6-(pyridoxal phosphate)lysine.

The protein belongs to the serine/threonine dehydratase family. DsdA subfamily. The cofactor is pyridoxal 5'-phosphate.

It catalyses the reaction D-serine = pyruvate + NH4(+). The sequence is that of Probable D-serine dehydratase from Bacillus mycoides (strain KBAB4) (Bacillus weihenstephanensis).